The chain runs to 65 residues: Beta-toxin Tf4a (65 aa).

The region spanning 2–63 is the LCN-type CS-alpha/beta domain; that stretch reads KEGYPADSKG…VWDSATNKCG (62 aa). 4 disulfides stabilise this stretch: Cys-12–Cys-62, Cys-16–Cys-38, Cys-24–Cys-43, and Cys-28–Cys-45. Cys-62 carries the cysteine amide modification.

This sequence belongs to the long (4 C-C) scorpion toxin superfamily. Sodium channel inhibitor family. Alpha subfamily. As to expression, expressed by the venom gland.

The protein resides in the secreted. Its function is as follows. Alpha toxins bind voltage-independently at site-3 of sodium channels (Nav) and inhibit the inactivation of the activated channels, thereby blocking neuronal transmission. This toxin is toxic to frogs but non-toxic to insect larvae (T.molitor), mammals (rats) and crustaceans (crabs) at the doses assayed. This chain is Beta-toxin Tf4a, found in Tityus fasciolatus (Central Brazilian scorpion).